The primary structure comprises 631 residues: Interferon-induced GTP-binding protein Mx1 (631 aa).

A Dynamin-type G domain is found at 33-306; the sequence is DLALPAIAVI…LTSHICKSLP (274 aa). The interval 43–50 is G1 motif; the sequence is GDQSSGKS. 43 to 50 provides a ligand contact to GTP; it reads GDQSSGKS. Residues 68–70 are G2 motif; that stretch reads VTR. The tract at residues 144 to 147 is G3 motif; it reads DLPG. GTP-binding positions include 144–148 and 213–216; these read DLPGI and TKPD. Residues 213-216 are G4 motif; sequence TKPD. Positions 245 to 248 are G5 motif; it reads KCRG. Positions 307 to 332 are bundle signaling element (BSE); the sequence is LLEDQINSSHQSASEELQKYGADIPE. The tract at residues 332–499 is middle domain; that stretch reads EDDRTRMSFL…HFQMEQIVYC (168 aa). The segment at 333 to 601 is stalk; sequence DDRTRMSFLV…TSKCSWFLEE (269 aa). The tract at residues 520–522 is critical for lipid-binding; it reads KTK. The 89-residue stretch at 543–631 folds into the GED domain; sequence TTEMTQHLKA…ARQKLAKFSD (89 aa).

This sequence belongs to the TRAFAC class dynamin-like GTPase superfamily. Dynamin/Fzo/YdjA family. In terms of assembly, homooligomer. Oligomerizes into multimeric filamentous or ring-like structures by virtue of its stalk domain. Oligomerization is critical for GTPase activity, protein stability, and recognition of viral target structures. Interacts with TRPC1, TRPC3, TRPC4, TRPC5, TRPC6 and TRPC7. Interacts with HSPA5. Interacts with TUBB/TUBB5. Interacts with DDX39A and DDX39B. In terms of processing, ISGylated.

It localises to the cytoplasm. Its subcellular location is the nucleus. The protein resides in the endoplasmic reticulum membrane. It is found in the perinuclear region. Interferon-induced dynamin-like GTPase with antiviral activity against influenza A virus, (IAV), influenza B virus (IBV) and Thogoto virus (THOV). Inhibits FLUAV by interfering with the process of primary transcription, probably by affecting the viral polymerase function. In Mus musculus (Mouse), this protein is Interferon-induced GTP-binding protein Mx1 (Mx1).